Consider the following 121-residue polypeptide: Small ribosomal subunit protein uS13 (121 aa).

The interval 90–121 (RHRHGLPVRGQHTKNNARTRKGKAVAIAGKKK) is disordered.

The protein belongs to the universal ribosomal protein uS13 family. In terms of assembly, part of the 30S ribosomal subunit. Forms a loose heterodimer with protein S19. Forms two bridges to the 50S subunit in the 70S ribosome.

In terms of biological role, located at the top of the head of the 30S subunit, it contacts several helices of the 16S rRNA. In the 70S ribosome it contacts the 23S rRNA (bridge B1a) and protein L5 of the 50S subunit (bridge B1b), connecting the 2 subunits; these bridges are implicated in subunit movement. Contacts the tRNAs in the A and P-sites. This Limosilactobacillus fermentum (strain NBRC 3956 / LMG 18251) (Lactobacillus fermentum) protein is Small ribosomal subunit protein uS13.